The following is a 338-amino-acid chain: 1-aminocyclopropane-1-carboxylate deaminase (338 aa).

An N6-(pyridoxal phosphate)lysine modification is found at Lys-51. Ser-78 serves as the catalytic Nucleophile.

Belongs to the ACC deaminase/D-cysteine desulfhydrase family. Homotrimer. Pyridoxal 5'-phosphate serves as cofactor.

It catalyses the reaction 1-aminocyclopropane-1-carboxylate + H2O = 2-oxobutanoate + NH4(+). Functionally, catalyzes a cyclopropane ring-opening reaction, the irreversible conversion of 1-aminocyclopropane-1-carboxylate (ACC) to ammonia and alpha-ketobutyrate. Allows growth on ACC as a nitrogen source. The protein is 1-aminocyclopropane-1-carboxylate deaminase of Ralstonia pickettii (strain 12J).